The primary structure comprises 378 residues: Erythronate-4-phosphate dehydrogenase (378 aa).

Substrate contacts are provided by S45 and T66. Positions 146 and 175 each coordinate NAD(+). R208 is a catalytic residue. D232 is a binding site for NAD(+). Residue E237 is part of the active site. H254 functions as the Proton donor in the catalytic mechanism. Residue G257 participates in NAD(+) binding. Y258 provides a ligand contact to substrate.

It belongs to the D-isomer specific 2-hydroxyacid dehydrogenase family. PdxB subfamily. As to quaternary structure, homodimer.

It is found in the cytoplasm. The enzyme catalyses 4-phospho-D-erythronate + NAD(+) = (R)-3-hydroxy-2-oxo-4-phosphooxybutanoate + NADH + H(+). It functions in the pathway cofactor biosynthesis; pyridoxine 5'-phosphate biosynthesis; pyridoxine 5'-phosphate from D-erythrose 4-phosphate: step 2/5. In terms of biological role, catalyzes the oxidation of erythronate-4-phosphate to 3-hydroxy-2-oxo-4-phosphonooxybutanoate. The protein is Erythronate-4-phosphate dehydrogenase of Escherichia coli (strain K12 / MC4100 / BW2952).